The sequence spans 622 residues: 1-deoxy-D-xylulose-5-phosphate synthase (622 aa).

Thiamine diphosphate contacts are provided by residues histidine 80 and 121-123 (GHS). Mg(2+) is bound at residue aspartate 152. Thiamine diphosphate contacts are provided by residues 153-154 (GA), asparagine 181, tyrosine 288, and glutamate 370. Asparagine 181 is a binding site for Mg(2+).

Belongs to the transketolase family. DXPS subfamily. In terms of assembly, homodimer. Mg(2+) is required as a cofactor. It depends on thiamine diphosphate as a cofactor.

The enzyme catalyses D-glyceraldehyde 3-phosphate + pyruvate + H(+) = 1-deoxy-D-xylulose 5-phosphate + CO2. Its pathway is metabolic intermediate biosynthesis; 1-deoxy-D-xylulose 5-phosphate biosynthesis; 1-deoxy-D-xylulose 5-phosphate from D-glyceraldehyde 3-phosphate and pyruvate: step 1/1. Catalyzes the acyloin condensation reaction between C atoms 2 and 3 of pyruvate and glyceraldehyde 3-phosphate to yield 1-deoxy-D-xylulose-5-phosphate (DXP). The chain is 1-deoxy-D-xylulose-5-phosphate synthase from Shewanella sp. (strain MR-4).